Reading from the N-terminus, the 157-residue chain is 2-C-methyl-D-erythritol 2,4-cyclodiphosphate synthase (157 aa).

The a divalent metal cation site is built by aspartate 8 and histidine 10. Residues 8–10 and 34–35 each bind 4-CDP-2-C-methyl-D-erythritol 2-phosphate; these read DVH and HS. A divalent metal cation is bound at residue histidine 42. 4-CDP-2-C-methyl-D-erythritol 2-phosphate-binding positions include 56–58, 61–65, 100–106, 132–135, phenylalanine 139, and arginine 142; these read DIG, FPDTD, AQRPKMA, and TTTE.

Belongs to the IspF family. In terms of assembly, homotrimer. The cofactor is a divalent metal cation.

The catalysed reaction is 4-CDP-2-C-methyl-D-erythritol 2-phosphate = 2-C-methyl-D-erythritol 2,4-cyclic diphosphate + CMP. Its pathway is isoprenoid biosynthesis; isopentenyl diphosphate biosynthesis via DXP pathway; isopentenyl diphosphate from 1-deoxy-D-xylulose 5-phosphate: step 4/6. In terms of biological role, involved in the biosynthesis of isopentenyl diphosphate (IPP) and dimethylallyl diphosphate (DMAPP), two major building blocks of isoprenoid compounds. Catalyzes the conversion of 4-diphosphocytidyl-2-C-methyl-D-erythritol 2-phosphate (CDP-ME2P) to 2-C-methyl-D-erythritol 2,4-cyclodiphosphate (ME-CPP) with a corresponding release of cytidine 5-monophosphate (CMP). This chain is 2-C-methyl-D-erythritol 2,4-cyclodiphosphate synthase, found in Geobacter sulfurreducens (strain ATCC 51573 / DSM 12127 / PCA).